A 412-amino-acid chain; its full sequence is MNDLIINHIAELILPRSTDKPLKGKELDELNVVKNGTVVIKDGKIVYAGTHTDDYDATETIDASGKVVSPALVDAHTHLTFGGSREHEMSLKRQGKSYLEILEMGGGILSTVNATRETSEDDLFKKAEHDLLTMIKHGVLAVESKSGYGLDRENELKQLKVSNRLAEKYDLDMKHTFLGPHAVPKEASSNEAFLEEMIALLPEVKQYADFADIFCETGVFTIEQSQHYMQKAKEAGFKVKIHADEIDPLGGLELAIDEQAISADHLVASSDKGKEKLRNSDTVAVLLPATTFYLGKEDYADARGMLDNNGAIALATDYNPGSSVTNNLQLVMAIAALKLKLSPNEVWNAVTVNAAKAIDINAGTINTGDKANLVIWDAPNHEYIPYHFGINHAEKVIKDGKVIVDNTLSFKA.

Positions 76 and 78 each coordinate Fe(3+). Zn(2+)-binding residues include His-76 and His-78. Positions 85, 148, and 181 each coordinate 4-imidazolone-5-propanoate. An N-formimidoyl-L-glutamate-binding site is contributed by Tyr-148. His-242 lines the Fe(3+) pocket. His-242 is a binding site for Zn(2+). Glu-245 contributes to the 4-imidazolone-5-propanoate binding site. Residue Asp-317 coordinates Fe(3+). Asp-317 is a binding site for Zn(2+). N-formimidoyl-L-glutamate-binding residues include Asn-319 and Gly-321. Ser-322 contributes to the 4-imidazolone-5-propanoate binding site.

This sequence belongs to the metallo-dependent hydrolases superfamily. HutI family. Zn(2+) serves as cofactor. The cofactor is Fe(3+).

It localises to the cytoplasm. It carries out the reaction 4-imidazolone-5-propanoate + H2O = N-formimidoyl-L-glutamate. The protein operates within amino-acid degradation; L-histidine degradation into L-glutamate; N-formimidoyl-L-glutamate from L-histidine: step 3/3. Functionally, catalyzes the hydrolytic cleavage of the carbon-nitrogen bond in imidazolone-5-propanoate to yield N-formimidoyl-L-glutamate. It is the third step in the universal histidine degradation pathway. The polypeptide is Imidazolonepropionase (Staphylococcus aureus (strain MSSA476)).